The following is a 459-amino-acid chain: MSAGGAVEPGLPAAAAAPSAAPARDPGPGHLFRPISAEDEEQQPTEIESLCMNCYRNGMTRLLLTKIPFFREIIVSSFSCEHCGWNNTEIQSAGRIQDQGVRYTLTVRAQEDMDREVVKTDSATTRIPELDFEIPAFSQKGALTTVEGLISRAISGLEQDQPTRRANEEAVAERIDEFIAKLKELKQVASPFTLIIDDPSGNSFVENPHAPRKDDALVITHYNRTLQQEEMLGLQAEAPEEKPEEEDIRNEVLQFNTNCPECNAPAQTNMKLVQIPHFKEVIIMATNCENCGHRTNEVKSGGAVEPLGTRITFHITDPSDMTRDLLKSETCSVEIPELEFELGMAVLGGKFTTLEGMLKDIRELVTKNPFTLGDSSSPGQTEKLQEFSQKLDQILEGILKAHFIMDDPAGNSYLQNVYAPEDDPEMKVEHYKRTFDQNEELGLNDMKTEGYETGLPAQR.

Residues 1-29 are compositionally biased toward low complexity; that stretch reads MSAGGAVEPGLPAAAAAPSAAPARDPGPG. A disordered region spans residues 1 to 43; the sequence is MSAGGAVEPGLPAAAAAPSAAPARDPGPGHLFRPISAEDEEQQ. 2 consecutive C4-type zinc fingers follow at residues 51–83 and 259–291; these read CMNC…CEHC and CPEC…CENC. The tract at residues 438 to 459 is disordered; it reads NEELGLNDMKTEGYETGLPAQR.

This sequence belongs to the ZPR1 family. Component of an import snRNP complex composed of KPNB1, SNUPN, SMN1 and ZNF259. Interacts (via C-terminal region) with SMN1 (via C-terminal region); the interaction occurs after treatment with serum. Interacts with elongation factor 1-alpha EEF1A1; the interaction occurs in a epidermal growth factor (EGF)-dependent manner. Interacts (via zinc fingers) with EGFR (via C-terminal cytoplasmic kinase domain); the interaction is negatively regulated in response to epidermal growth factor (EGF) stimulation and EGFR kinase activity. May also bind to the PDGFR receptor.

The protein resides in the nucleus. Its subcellular location is the cytoplasm. It is found in the nucleolus. It localises to the perinuclear region. The protein localises to the gem. The protein resides in the cajal body. Its subcellular location is the cell projection. It is found in the axon. It localises to the growth cone. Its function is as follows. Acts as a signaling molecule that communicates proliferative growth signals from the cytoplasm to the nucleus. Plays a role for the localization and accumulation of the survival motor neuron protein SMN1 in sub-nuclear bodies, including gems and Cajal bodies. Induces neuron differentiation and stimulates axonal growth and formation of growth cone in spinal cord motor neurons. Plays a role in the splicing of cellular pre-mRNAs. May be involved in H(2)O(2)-induced neuronal cell death. This Bos taurus (Bovine) protein is Zinc finger protein ZPR1 (ZNF259).